The sequence spans 1038 residues: Dorsal-ventral patterning protein Sog (1038 aa).

Over Met-1–His-53 the chain is Cytoplasmic. A helical; Signal-anchor for type II membrane protein membrane pass occupies residues Leu-54–Val-74. Residues Thr-75–Ser-1038 are Extracellular-facing. The 76-residue stretch at Thr-100 to Pro-175 folds into the VWFC 1 domain. Residues Asn-179 and Asn-287 are each glycosylated (N-linked (GlcNAc...) asparagine). CHRD domains follow at residues Asn-197–Ala-337, Gln-339–Ser-471, Ile-474–Val-588, and Arg-592–Val-713. Residues Asn-520, Asn-666, Asn-752, and Asn-821 are each glycosylated (N-linked (GlcNAc...) asparagine). The region spanning Thr-742–Val-804 is the VWFC 2 domain. VWFC domains follow at residues Arg-830–Pro-899 and Gly-939–Arg-1020.

This sequence belongs to the chordin family. Component of a complex composed of dpp, sog and tsg. Interacts with palmitoyltransferase Hip14. Palmitoylated, probably by Hip14. Post-translationally, cleaved by metalloproteases tok and tld. Cleavage by tok during pupal development contributes to specification of the posterior crossvein in the wing. Abuts the dorsal dpp-expressing cells in a lateral stripe 14-16 cells wide. Later in embryogenesis it is expressed in neuroectoderm and in the endoderm spaced along the anterior-posterior axis of the developing gut.

The protein resides in the golgi apparatus membrane. Its subcellular location is the cell membrane. The protein localises to the secreted. In terms of biological role, putative negative growth factor. Antagonist of dpp, a protein involved in patterning the dorsal region and in the development of the neuroectoderm; dpp inhibition is enhanced by tsg. Required for establishment of a narrow stripe of peak levels of BMP signaling in the dorsal midline of early embryos, that will give rise to the amnioserosa. During pupal development, plays a role in specification of the posterior crossvein in the wing. Exhibits both agonist and antagonist activities towards BMP signaling during pupal wing patterning. In Drosophila melanogaster (Fruit fly), this protein is Dorsal-ventral patterning protein Sog (sog).